A 430-amino-acid polypeptide reads, in one-letter code: MKETIDFLIDTIEARQVLDSRGNPTVEAEVFLECGASGRAIVPSGASTGAHEAHELRDGGSKYMGKGVLNAVNKIHETISPALCGLSALDQTTVDKLMIEIDGTFNKSNLGANSILAVSLATARASANALDVPLYRYLGDPLSNLLPVPLMNVINGGAHAPNSLDFQEFMLVPHGVQNFSESLRMGTEIFHSLKSLLDKKGLSTAVGDEGGFAPNLSSSEEAGDLLLEAIQKAGFIPGEQVSLALDAASTEFYSDGIYKYEGKSLNSSEMISYLSRLVSNYPIVSIEDGLAEDDWEGWSELNKELGNKVQLVGDDLFVTNTERLRKGIMEKSANSILIKVNQIGTLTETLEAIELAKTSGFTSVISHRSGETEDTTIADLSVATRSGQIKTGSLSRSERIAKYNRLLKIEEELGNQARFAGALGLGPKNI.

Residue Q167 coordinates (2R)-2-phosphoglycerate. The active-site Proton donor is the E209. D246, E287, and D314 together coordinate Mg(2+). (2R)-2-phosphoglycerate contacts are provided by K339, R368, S369, and K390. The active-site Proton acceptor is the K339.

The protein belongs to the enolase family. The cofactor is Mg(2+).

The protein resides in the cytoplasm. The protein localises to the secreted. Its subcellular location is the cell surface. It carries out the reaction (2R)-2-phosphoglycerate = phosphoenolpyruvate + H2O. The protein operates within carbohydrate degradation; glycolysis; pyruvate from D-glyceraldehyde 3-phosphate: step 4/5. Catalyzes the reversible conversion of 2-phosphoglycerate (2-PG) into phosphoenolpyruvate (PEP). It is essential for the degradation of carbohydrates via glycolysis. The sequence is that of Enolase from Prochlorococcus marinus (strain MIT 9312).